Reading from the N-terminus, the 472-residue chain is 3-isopropylmalate dehydratase large subunit (472 aa).

[4Fe-4S] cluster contacts are provided by cysteine 347, cysteine 407, and cysteine 410.

It belongs to the aconitase/IPM isomerase family. LeuC type 1 subfamily. Heterodimer of LeuC and LeuD. [4Fe-4S] cluster is required as a cofactor.

It catalyses the reaction (2R,3S)-3-isopropylmalate = (2S)-2-isopropylmalate. It functions in the pathway amino-acid biosynthesis; L-leucine biosynthesis; L-leucine from 3-methyl-2-oxobutanoate: step 2/4. Catalyzes the isomerization between 2-isopropylmalate and 3-isopropylmalate, via the formation of 2-isopropylmaleate. This Opitutus terrae (strain DSM 11246 / JCM 15787 / PB90-1) protein is 3-isopropylmalate dehydratase large subunit.